The following is a 566-amino-acid chain: Cytokine-like nuclear factor N-PAC (566 aa).

In terms of domain architecture, PWWP spans 9-70 (VNDLVWAKMK…ETQIKPYLQF (62 aa)). Disordered regions lie at residues 127 to 147 (VASG…NTTT) and 206 to 234 (MLDD…SSLD). A dehydrogenase domain region spans residues 274–566 (RNIKASQLKF…ASAVYVRARF (293 aa)). NAD(+) is bound by residues 284–298 (GFLG…IVKN) and K518.

It belongs to the HIBADH-related family. NP60 subfamily. Binds to mononucleosomes. Interacts with male-specific lethal (MSL) histone acetyltransferase complex at least composed of mof, msl-1, msl-2 and msl-3.

Its subcellular location is the chromosome. In terms of biological role, may have oxidoreductase activity. This is Cytokine-like nuclear factor N-PAC from Anopheles gambiae (African malaria mosquito).